The sequence spans 440 residues: Chromosome partition protein MukF (440 aa).

Residues 208–236 (LSETSGTLRELQDTLEAAGDKLQANLLRI) are leucine-zipper.

This sequence belongs to the MukF family. In terms of assembly, interacts, and probably forms a ternary complex, with MukE and MukB via its C-terminal region. The complex formation is stimulated by calcium or magnesium. It is required for an interaction between MukE and MukB.

Its subcellular location is the cytoplasm. The protein localises to the nucleoid. Its function is as follows. Involved in chromosome condensation, segregation and cell cycle progression. May participate in facilitating chromosome segregation by condensation DNA from both sides of a centrally located replisome during cell division. Not required for mini-F plasmid partitioning. Probably acts via its interaction with MukB and MukE. Overexpression results in anucleate cells. It has a calcium binding activity. The protein is Chromosome partition protein MukF of Escherichia coli O9:H4 (strain HS).